Here is a 276-residue protein sequence, read N- to C-terminus: Src-like-adapter (276 aa).

Residue Gly-2 is the site of N-myristoyl glycine attachment. One can recognise an SH3 domain in the interval 22–82 (LDSDFLAVLS…PGICVARVYH (61 aa)). Positions 84–175 (WLFEGLGRDK…GLCCVLTTPC (92 aa)) constitute an SH2 domain. The tract at residues 212–276 (EGTENPLGVD…FFSSPPYFED (65 aa)) is SLA C-terminal. Ser-253 carries the post-translational modification Phosphoserine. Tyr-273 is modified (phosphotyrosine).

As to quaternary structure, interacts with EPHA2, VAV1, LCP2 and PDGFRB. Homodimer. Homodimerization and interaction with phosphorylated CBL occurs via its C-terminal domain. Interacts with phosphorylated proteins ZAP70, CD3Z, SYK and LAT via its SH2 domain. Expressed in lung and fetal brain. Weakly expressed in heart, adult brain, placenta, liver, skeletal muscle, kidney and pancreas.

Its subcellular location is the cytoplasm. It localises to the endosome. In terms of biological role, adapter protein, which negatively regulates T-cell receptor (TCR) signaling. Inhibits T-cell antigen-receptor induced activation of nuclear factor of activated T-cells. Involved in the negative regulation of positive selection and mitosis of T-cells. May act by linking signaling proteins such as ZAP70 with CBL, leading to a CBL dependent degradation of signaling proteins. The chain is Src-like-adapter (SLA) from Homo sapiens (Human).